The primary structure comprises 146 residues: Transcriptional regulator MraZ (146 aa).

SpoVT-AbrB domains follow at residues 5–48 (TSYH…TLEE) and 77–120 (ASEC…SRAK).

It belongs to the MraZ family. In terms of assembly, forms oligomers.

It localises to the cytoplasm. The protein localises to the nucleoid. This Desulfosudis oleivorans (strain DSM 6200 / JCM 39069 / Hxd3) (Desulfococcus oleovorans) protein is Transcriptional regulator MraZ.